We begin with the raw amino-acid sequence, 463 residues long: Serine/threonine-protein kinase sgk-1 (463 aa).

The Protein kinase domain occupies 135–392 (FDYLTTIGKG…FRDIRDHPFF (258 aa)). Residues 141-149 (IGKGSFGRV) and lysine 164 each bind ATP. Aspartate 259 (proton acceptor) is an active-site residue. The AGC-kinase C-terminal domain occupies 393–463 (LPVDWDKLLN…TFVDTNRVLV (71 aa)).

The protein belongs to the protein kinase superfamily. AGC Ser/Thr protein kinase family. Interacts with pdk-1, akt-1, akt-2 and daf-16. Part of a complex containing sgk-1, akt-1 and akt-2. Interacts with let-92 phosphatase regulatory subunit pptr-1. It depends on Mg(2+) as a cofactor. As to expression, expressed in late embryos just before hatching. At postembryonic stages, expressed in sensory and motor neurons and in the intestine. Highly expressed in the intestine and head and tail neurons.

The protein resides in the cytoplasm. Its subcellular location is the nucleus. The protein localises to the apical cell membrane. The enzyme catalyses L-seryl-[protein] + ATP = O-phospho-L-seryl-[protein] + ADP + H(+). It carries out the reaction L-threonyl-[protein] + ATP = O-phospho-L-threonyl-[protein] + ADP + H(+). With respect to regulation, phosphorylated and activated by pdk-1. In terms of biological role, acts downstream of PI3 kinase age-1 and kinase pdk-1 in the daf-2/insulin receptor-like transduction pathway. Essential role in regulating development, stress response, and longevity. Phosphorylates Forkhead-related daf-16 and the longevity-promoting skn-1 transcription factors, which inhibits their entry into the nucleus and antagonizes their function. Promotes the cytoplasmic localization of the transcription factor pqm-1. Plays a role in the intracellular trafficking of proteins such as mig-14 to the cell membrane, and this may be through positively regulating ceramide synthesis. Acts downstream of rict-1 to regulate fat storage, size, development and vitellogenesis. Downstream of age-1 and together with akt-1/2, promotes cell survival during embryonic development. Plays a role in maintaining the gonadal basement membrane through antagonizing akt-1 activity. Does not appear to play a role in immune function. The polypeptide is Serine/threonine-protein kinase sgk-1 (Caenorhabditis elegans).